A 256-amino-acid chain; its full sequence is Hydroxyethylthiazole kinase (256 aa).

Substrate is bound at residue M38. R114 and T159 together coordinate ATP. G186 is a binding site for substrate.

This sequence belongs to the Thz kinase family. The cofactor is Mg(2+).

It catalyses the reaction 5-(2-hydroxyethyl)-4-methylthiazole + ATP = 4-methyl-5-(2-phosphooxyethyl)-thiazole + ADP + H(+). It functions in the pathway cofactor biosynthesis; thiamine diphosphate biosynthesis; 4-methyl-5-(2-phosphoethyl)-thiazole from 5-(2-hydroxyethyl)-4-methylthiazole: step 1/1. Functionally, catalyzes the phosphorylation of the hydroxyl group of 4-methyl-5-beta-hydroxyethylthiazole (THZ). The chain is Hydroxyethylthiazole kinase from Streptococcus agalactiae serotype III (strain NEM316).